We begin with the raw amino-acid sequence, 149 residues long: Calmodulin (149 aa).

At Ala2 the chain carries N-acetylalanine. 4 consecutive EF-hand domains span residues 8–43 (EQIAEFKEAFSLFDKDGDGCITTKELGTVMRSLGQN), 44–79 (PTEAELQDMINEVDADGNGTIDFPELLNLMARKMKD), 81–116 (DSEEELKEAFRVFDKDQNGFISAAELRHVMTNLGEK), and 117–149 (LTDEEVDEMIREADVDGDGQINYEEFVKVMMAK). Asp21, Asp23, Asp25, Cys27, Glu32, Asp57, Asp59, Asn61, Thr63, Glu68, Asp94, Asp96, Asn98, and Glu105 together coordinate Ca(2+). Lys116 is modified (N6,N6,N6-trimethyllysine). Ca(2+)-binding residues include Asp130, Asp132, Asp134, Gln136, and Glu141.

It belongs to the calmodulin family.

Its function is as follows. Calmodulin mediates the control of a large number of enzymes, ion channels and other proteins by Ca(2+). Among the enzymes to be stimulated by the calmodulin-Ca(2+) complex are a number of protein kinases and phosphatases. This is Calmodulin (CALM1) from Zea mays (Maize).